A 467-amino-acid polypeptide reads, in one-letter code: 3-isopropylmalate dehydratase large subunit (467 aa).

[4Fe-4S] cluster is bound by residues C348, C409, and C412. Residues 423 to 448 are disordered; the sequence is NERSISTSNRNFEGRQGKGSRTHLAS.

It belongs to the aconitase/IPM isomerase family. LeuC type 1 subfamily. Heterodimer of LeuC and LeuD. [4Fe-4S] cluster serves as cofactor.

It catalyses the reaction (2R,3S)-3-isopropylmalate = (2S)-2-isopropylmalate. The protein operates within amino-acid biosynthesis; L-leucine biosynthesis; L-leucine from 3-methyl-2-oxobutanoate: step 2/4. Catalyzes the isomerization between 2-isopropylmalate and 3-isopropylmalate, via the formation of 2-isopropylmaleate. This Bifidobacterium longum (strain DJO10A) protein is 3-isopropylmalate dehydratase large subunit.